Here is a 238-residue protein sequence, read N- to C-terminus: Ribosomal RNA small subunit methyltransferase I (238 aa).

It belongs to the methyltransferase superfamily. RsmI family.

The protein localises to the cytoplasm. It carries out the reaction cytidine(1402) in 16S rRNA + S-adenosyl-L-methionine = 2'-O-methylcytidine(1402) in 16S rRNA + S-adenosyl-L-homocysteine + H(+). Its function is as follows. Catalyzes the 2'-O-methylation of the ribose of cytidine 1402 (C1402) in 16S rRNA. The protein is Ribosomal RNA small subunit methyltransferase I of Mesomycoplasma conjunctivae (strain ATCC 25834 / NCTC 10147 / HRC/581) (Mycoplasma conjunctivae).